The sequence spans 384 residues: FAD-dependent urate hydroxylase (384 aa).

Residues glycine 11, 30–31 (EA), serine 43, and valine 125 contribute to the FAD site. Substrate contacts are provided by residues asparagine 178, arginine 204, and 216-218 (YFF). Residues aspartate 285 and 295–299 (GQGGC) contribute to the FAD site.

It belongs to the FAD-dependent urate hydroxylase family. In terms of assembly, monomer. It depends on FAD as a cofactor.

It carries out the reaction urate + NADH + O2 + H(+) = 5-hydroxyisourate + NAD(+) + H2O. Its pathway is purine metabolism; urate degradation. Functionally, catalyzes the hydroxylation of urate to 5-hydroxyisourate (HIU). The protein is FAD-dependent urate hydroxylase of Klebsiella pneumoniae subsp. pneumoniae (strain ATCC 700721 / MGH 78578).